The following is a 162-amino-acid chain: Phosphopantetheine adenylyltransferase (162 aa).

Substrate is bound at residue S11. Residues 11 to 12 and H19 contribute to the ATP site; that span reads SF. 3 residues coordinate substrate: K43, T75, and R89. ATP is bound by residues 90-92, E100, and 125-131; these read GLR and YAFLSSS.

Belongs to the bacterial CoaD family. As to quaternary structure, homohexamer. Requires Mg(2+) as cofactor.

The protein localises to the cytoplasm. It catalyses the reaction (R)-4'-phosphopantetheine + ATP + H(+) = 3'-dephospho-CoA + diphosphate. Its pathway is cofactor biosynthesis; coenzyme A biosynthesis; CoA from (R)-pantothenate: step 4/5. Reversibly transfers an adenylyl group from ATP to 4'-phosphopantetheine, yielding dephospho-CoA (dPCoA) and pyrophosphate. The protein is Phosphopantetheine adenylyltransferase of Finegoldia magna (strain ATCC 29328 / DSM 20472 / WAL 2508) (Peptostreptococcus magnus).